A 578-amino-acid chain; its full sequence is E3 ubiquitin-protein ligase hrd-like protein 1 (578 aa).

The chain crosses the membrane as a helical span at residues 32–52; that stretch reads GYLALSLCVAFIASASVFTHF. A glycan (N-linked (GlcNAc...) asparagine) is linked at Asn68. Helical transmembrane passes span 76–96, 101–121, 134–154, 163–183, 202–222, 230–250, and 286–306; these read FGIN…HYIL, LIWV…KLII, VAAR…LSVV, VMPW…QFVT, SFIS…VSRF, PAVL…YILF, and FLSY…SIFF. Residues 350–388 form an RING-type; atypical zinc finger; the sequence is CIVCWELLGTSRRLPCSHQFHDWCLMWWLAQDSSCPTCR. The 43-residue stretch at 447–489 folds into the CUE domain; it reads QLQSMLETVLEMFPQMSPETILADLRQSGSAQSTIENILEGRM. Asn492 is a glycosylation site (N-linked (GlcNAc...) asparagine).

The protein localises to the membrane. Its function is as follows. Proposed to have a role in neuroprotection. The chain is E3 ubiquitin-protein ligase hrd-like protein 1 from Caenorhabditis briggsae.